The sequence spans 134 residues: Kinetochore-binding protein 3 (134 aa).

Its subcellular location is the nucleus. The protein resides in the chromosome. It localises to the centromere. It is found in the kinetochore. This Caenorhabditis elegans protein is Kinetochore-binding protein 3 (kbp-3).